The sequence spans 916 residues: Isoleucine--tRNA ligase (916 aa).

A 'HIGH' region motif is present at residues 57–67 (PYANGNLHMGH). E554 contributes to the L-isoleucyl-5'-AMP binding site. Residues 595–599 (KMSKS) carry the 'KMSKS' region motif. Residue K598 coordinates ATP. C885, C888, C905, and C908 together coordinate Zn(2+).

The protein belongs to the class-I aminoacyl-tRNA synthetase family. IleS type 1 subfamily. In terms of assembly, monomer. Zn(2+) is required as a cofactor.

It is found in the cytoplasm. It catalyses the reaction tRNA(Ile) + L-isoleucine + ATP = L-isoleucyl-tRNA(Ile) + AMP + diphosphate. Catalyzes the attachment of isoleucine to tRNA(Ile). As IleRS can inadvertently accommodate and process structurally similar amino acids such as valine, to avoid such errors it has two additional distinct tRNA(Ile)-dependent editing activities. One activity is designated as 'pretransfer' editing and involves the hydrolysis of activated Val-AMP. The other activity is designated 'posttransfer' editing and involves deacylation of mischarged Val-tRNA(Ile). This is Isoleucine--tRNA ligase from Staphylococcus haemolyticus (strain JCSC1435).